We begin with the raw amino-acid sequence, 855 residues long: DNA mismatch repair protein MutS (855 aa).

Residue Gly616 to Ser623 participates in ATP binding.

This sequence belongs to the DNA mismatch repair MutS family.

Functionally, this protein is involved in the repair of mismatches in DNA. It is possible that it carries out the mismatch recognition step. This protein has a weak ATPase activity. The chain is DNA mismatch repair protein MutS from Salmonella schwarzengrund (strain CVM19633).